We begin with the raw amino-acid sequence, 147 residues long: Lysozyme C (147 aa).

Positions 1 to 18 are cleaved as a signal peptide; that stretch reads MKFFLILGFCLLPLIAQG. A C-type lysozyme domain is found at 19–147; that stretch reads KVFQRCELAA…VSQWIRGCRV (129 aa). Cystine bridges form between C24–C145, C48–C133, C82–C98, and C94–C112. Catalysis depends on residues E53 and D70. Position 119 (D119) interacts with substrate.

It belongs to the glycosyl hydrolase 22 family. Monomer. As to expression, expressed in liver and ovary. Not expressed in bone marrow, lung, spleen, intestine or oviduct.

The protein resides in the secreted. The catalysed reaction is Hydrolysis of (1-&gt;4)-beta-linkages between N-acetylmuramic acid and N-acetyl-D-glucosamine residues in a peptidoglycan and between N-acetyl-D-glucosamine residues in chitodextrins.. Functionally, lysozymes have primarily a bacteriolytic function; those in tissues and body fluids are associated with the monocyte-macrophage system and enhance the activity of immunoagents. Has bacteriolytic activity against M.luteus. The chain is Lysozyme C from Dromaius novaehollandiae (Emu).